A 226-amino-acid chain; its full sequence is HTH-type transcriptional regulator TcmR (226 aa).

Over residues 1–16 (MDSAETDTPSTRSTPN) the composition is skewed to polar residues. The interval 1–25 (MDSAETDTPSTRSTPNGPGLRQRKL) is disordered. An HTH tetR-type domain is found at 26–86 (RRTRDQLIRE…TPISAIDEAF (61 aa)). The H-T-H motif DNA-binding region spans 49 to 68 (TVEQIAEAVEVHPRTFFRHF).

It functions in the pathway antibiotic biosynthesis; tetracenomycin C biosynthesis. Represses transcription of the divergently oriented tcmR and tcmA (tetracenomycin C resistance and export) genes by binding to an intergenic operator region. This binding is inhibited by tetracenomycin C. In Streptomyces glaucescens, this protein is HTH-type transcriptional regulator TcmR (tcmR).